Consider the following 108-residue polypeptide: Small ribosomal subunit protein bS18c (108 aa).

2 stretches are compositionally biased toward basic residues: residues 1 to 19 (MDKS…RRRL) and 97 to 108 (RARKKKIGLLLN). Disordered regions lie at residues 1 to 23 (MDKS…PPIG) and 83 to 108 (QFER…LLLN).

Belongs to the bacterial ribosomal protein bS18 family. Part of the 30S ribosomal subunit.

The protein localises to the plastid. It is found in the chloroplast. This chain is Small ribosomal subunit protein bS18c, found in Illicium oligandrum (Star anise).